A 100-amino-acid polypeptide reads, in one-letter code: Noncompact myelin-associated protein (100 aa).

The Extracellular portion of the chain corresponds to 1–28 (MTTATTLGDAVFSLNMTRGEDALYKSSG). Residues 29–49 (AIVAAIVVVVIIIVTLVLILL) form a helical membrane-spanning segment. Residues 50–100 (KMYNRRMRTRRELEPKSPKPPVPPALDPSSNGSQQPATVTFDPANVHVETR) lie on the Cytoplasmic side of the membrane. Residues 58–100 (TRRELEPKSPKPPVPPALDPSSNGSQQPATVTFDPANVHVETR) form a disordered region.

Post-translationally, glycosylated. Found in the peripheral nervous system (PNS) Schwann cells (at protein level). Expressed in the PNS, primarily limited to Schwann cells.

The protein resides in the cell membrane. Plays a role in myelin formation. This is Noncompact myelin-associated protein (Ncmap) from Mus musculus (Mouse).